We begin with the raw amino-acid sequence, 404 residues long: Dihydrosphingosine 1-phosphate phosphatase YSR3 (404 aa).

Residues 1-86 (MTIIQTVTEL…PFRDVYFKYT (86 aa)) lie on the Lumenal side of the membrane. The N-linked (GlcNAc...) asparagine glycan is linked to Asn62. A helical membrane pass occupies residues 87–107 (SLMGSHMFYVIVLPMPVWLGY). Topologically, residues 108-113 (RDLTRD) are cytoplasmic. The helical transmembrane segment at 114 to 134 (MIYVLGYSIYLSGYLKDYWCL) threads the bilayer. Residues 129-137 (KDYWCLPRP) are phosphatase sequence motif I. Residues 135–154 (PRPKSPPVDRITLSEYTTKE) are Lumenal-facing. The chain crosses the membrane as a helical span at residues 155–176 (YGAPSSHSANATAVSLLFFWRI). Positions 158–161 (PSSH) are phosphatase sequence motif II. His161 serves as the catalytic Proton donor. Residues 177 to 182 (CLSDTL) lie on the Cytoplasmic side of the membrane. The chain crosses the membrane as a helical span at residues 183–203 (VWPTKLLLLSLVIFYYLTLVF). The Lumenal portion of the chain corresponds to 204 to 215 (GRVYCGMHGMLD). Positions 204–215 (GRVYCGMHGMLD) are phosphatase sequence motif III. His211 functions as the Nucleophile in the catalytic mechanism. A helical membrane pass occupies residues 216–236 (LFSGAAVGAICFFIRIWVVHA). The Cytoplasmic portion of the chain corresponds to 237–241 (LRNFQ). A helical transmembrane segment spans residues 242-262 (IGEHLWFPLLSVAWGLFILFN). Over 263-319 (HVRPIDECPCFEDSVAFIGVVSGLDCSDWLTERYGWNLVCSRYASCGSKVFLRPLVG) the chain is Lumenal. A helical transmembrane segment spans residues 320–340 (VASVIVWKDVISKTAVYTLLI). Topologically, residues 341 to 379 (KLLRFHDDRSEKVHFHNETSEEEECLLYSGVSKVEIVGR) are cytoplasmic. A helical transmembrane segment spans residues 380–400 (FLIYAGIPTTVFLLCPVFFTW). The Lumenal portion of the chain corresponds to 401–404 (TNLR).

It belongs to the type 2 lipid phosphate phosphatase family.

The protein localises to the endoplasmic reticulum membrane. It catalyses the reaction sphinganine 1-phosphate + H2O = sphinganine + phosphate. Its function is as follows. Dihydrosphingosine 1-phosphate phosphatase required for efficient ceramide synthesis from exogenous sphingoid bases. Involved in endocytosis and calcium-mediated signaling. The protein is Dihydrosphingosine 1-phosphate phosphatase YSR3 of Saccharomyces cerevisiae (strain ATCC 204508 / S288c) (Baker's yeast).